Consider the following 506-residue polypeptide: Histidine--tRNA ligase, mitochondrial (506 aa).

A mitochondrion-targeting transit peptide spans 1–33; the sequence is MPLLGLLPRRAWASLLSQLLRPPCASCTGAVRC. S67 is modified (phosphoserine). L-histidine contacts are provided by residues 131–133, R158, Q174, D178, R327, and 331–332; these read DLT and YY. K444 is modified (N6-acetyllysine).

It belongs to the class-II aminoacyl-tRNA synthetase family. As to quaternary structure, homodimer. In terms of tissue distribution, a high level expression is seen in the heart, kidney and skeletal muscle while a lower level expression is seen in the brain and liver.

It is found in the mitochondrion. The enzyme catalyses tRNA(His) + L-histidine + ATP = L-histidyl-tRNA(His) + AMP + diphosphate + H(+). Functionally, mitochondrial aminoacyl-tRNA synthetase that catalyzes the ATP-dependent ligation of histidine to the 3'-end of its cognate tRNA, via the formation of an aminoacyl-adenylate intermediate (His-AMP). The sequence is that of Histidine--tRNA ligase, mitochondrial (HARS2) from Homo sapiens (Human).